The following is a 456-amino-acid chain: Tyrosinase-like protein 2 (456 aa).

Residues 1–22 (MNTMALFGKVILLQFLIGVGFC) form the signal peptide. 6 residues coordinate Cu cation: histidine 145, histidine 154, histidine 163, histidine 295, histidine 299, and histidine 322.

Requires Cu(2+) as cofactor. As to expression, prismatic layer of shell (at protein level).

Its subcellular location is the secreted. The polypeptide is Tyrosinase-like protein 2 (Margaritifera margaritifera (Freshwater pearl mussel)).